The primary structure comprises 275 residues: Formamidopyrimidine-DNA glycosylase (275 aa).

The active-site Schiff-base intermediate with DNA is Pro-2. Catalysis depends on Glu-3, which acts as the Proton donor. Catalysis depends on Lys-60, which acts as the Proton donor; for beta-elimination activity. DNA contacts are provided by His-93 and Arg-112. The segment at 240 to 274 (FVYGRKDEPCKKCGSPIEKTVVGGRGTHFCIKCQK) adopts an FPG-type zinc-finger fold. Residue Arg-264 is the Proton donor; for delta-elimination activity of the active site.

Belongs to the FPG family. Monomer. Zn(2+) serves as cofactor.

It catalyses the reaction Hydrolysis of DNA containing ring-opened 7-methylguanine residues, releasing 2,6-diamino-4-hydroxy-5-(N-methyl)formamidopyrimidine.. It carries out the reaction 2'-deoxyribonucleotide-(2'-deoxyribose 5'-phosphate)-2'-deoxyribonucleotide-DNA = a 3'-end 2'-deoxyribonucleotide-(2,3-dehydro-2,3-deoxyribose 5'-phosphate)-DNA + a 5'-end 5'-phospho-2'-deoxyribonucleoside-DNA + H(+). In terms of biological role, involved in base excision repair of DNA damaged by oxidation or by mutagenic agents. Acts as a DNA glycosylase that recognizes and removes damaged bases. Has a preference for oxidized purines, such as 7,8-dihydro-8-oxoguanine (8-oxoG). Has AP (apurinic/apyrimidinic) lyase activity and introduces nicks in the DNA strand. Cleaves the DNA backbone by beta-delta elimination to generate a single-strand break at the site of the removed base with both 3'- and 5'-phosphates. The polypeptide is Formamidopyrimidine-DNA glycosylase (Bacillus licheniformis (strain ATCC 14580 / DSM 13 / JCM 2505 / CCUG 7422 / NBRC 12200 / NCIMB 9375 / NCTC 10341 / NRRL NRS-1264 / Gibson 46)).